A 378-amino-acid chain; its full sequence is tRNA N(3)-cytidine methyltransferase METTL2B (378 aa).

Position 2 is an N-acetylalanine (alanine 2). Serine 4 carries the phosphoserine modification. Tryptophan 78 and tyrosine 82 together coordinate S-adenosyl-L-methionine. Residue threonine 154 is modified to Phosphothreonine. Residues glycine 188, aspartate 213, aspartate 239, leucine 240, and isoleucine 260 each coordinate S-adenosyl-L-methionine.

This sequence belongs to the methyltransferase superfamily. METL family. Monomer. Interacts with DALRD3.

The protein localises to the cytoplasm. The enzyme catalyses cytidine(32) in tRNA(Thr) + S-adenosyl-L-methionine = N(3)-methylcytidine(32) in tRNA(Thr) + S-adenosyl-L-homocysteine + H(+). The catalysed reaction is cytidine(32) in tRNA(Arg)(CCU) + S-adenosyl-L-methionine = N(3)-methylcytidine(32) in tRNA(Arg)(CCU) + S-adenosyl-L-homocysteine + H(+). In terms of biological role, S-adenosyl-L-methionine-dependent methyltransferase that mediates N(3)-methylcytidine modification of residue 32 of the tRNA anticodon loop of tRNA(Thr)(UGU) and tRNA(Arg)(CCU). The polypeptide is tRNA N(3)-cytidine methyltransferase METTL2B (Homo sapiens (Human)).